The following is a 99-amino-acid chain: Orphan antixoxin protein TacA (99 aa).

This sequence belongs to the TacA antitoxin family.

Functionally, putative antitoxin component of a toxin-antitoxin (TA) system; its cognate toxin (usually a tRNA acetylase) is unknown. The protein is Orphan antixoxin protein TacA of Haemophilus influenzae (strain ATCC 51907 / DSM 11121 / KW20 / Rd).